The following is a 664-amino-acid chain: ATP-dependent RNA helicase MSS116, mitochondrial (664 aa).

The N-terminal 26 residues, 1-26 (MLTSILIKGRTPVLASRNLLAALSNC), are a transit peptide targeting the mitochondrion. The disordered stretch occupies residues 42–79 (NRDQRNFGRNQRNNNSNRYRNSRFNSRPRTRSREDDDE). The span at 48-68 (FGRNQRNNNSNRYRNSRFNSR) shows a compositional bias: low complexity. A Q motif motif is present at residues 106–134 (SLLEEGVLDKEIHKAITRMEFPGLTPVQQ). One can recognise a Helicase ATP-binding domain in the interval 139-326 (PILSSEDHDV…NNIMNKKECL (188 aa)). 152-159 (AKTGTGKT) is an ATP binding site. A DEAD box motif is present at residues 267-270 (DEAD). The Helicase C-terminal domain occupies 355-512 (SIFAAVEHIK…EKYEPSEEIK (158 aa)). Residues 602–664 (GNNKSYDYDD…NYSSRNSNIY (63 aa)) are disordered. Residues 628 to 638 (QNRDYDDEPFR) are compositionally biased toward basic and acidic residues. Positions 639 to 649 (RSNNNRRSFSR) are enriched in low complexity. Residues 653–664 (KNNYSSRNSNIY) show a composition bias toward polar residues.

Belongs to the DEAD box helicase family. DDX18/HAS1 subfamily.

It is found in the mitochondrion matrix. It carries out the reaction ATP + H2O = ADP + phosphate + H(+). Its function is as follows. ATP-dependent RNA helicase required for mitochondrial splicing of group I and II introns. Specifically involved in the ATP-dependent splicing of the bl1 intron of COB. Also required for efficient mitochondrial translation. The sequence is that of ATP-dependent RNA helicase MSS116, mitochondrial (MSS116) from Saccharomyces cerevisiae (strain ATCC 204508 / S288c) (Baker's yeast).